The sequence spans 469 residues: Probable Xaa-Pro aminopeptidase PEPP (469 aa).

Aspartate 265, aspartate 276, glutamate 399, and glutamate 439 together coordinate Mn(2+).

It belongs to the peptidase M24B family. The cofactor is Mn(2+).

It carries out the reaction Release of any N-terminal amino acid, including proline, that is linked to proline, even from a dipeptide or tripeptide.. Its function is as follows. Catalyzes the removal of a penultimate prolyl residue from the N-termini of peptides. In Coccidioides posadasii (strain RMSCC 757 / Silveira) (Valley fever fungus), this protein is Probable Xaa-Pro aminopeptidase PEPP (PEPP).